Reading from the N-terminus, the 358-residue chain is Probable branched-chain-amino-acid aminotransferase (358 aa).

The residue at position 196 (Lys196) is an N6-(pyridoxal phosphate)lysine.

The protein belongs to the class-IV pyridoxal-phosphate-dependent aminotransferase family. Pyridoxal 5'-phosphate is required as a cofactor.

The enzyme catalyses L-leucine + 2-oxoglutarate = 4-methyl-2-oxopentanoate + L-glutamate. It catalyses the reaction L-isoleucine + 2-oxoglutarate = (S)-3-methyl-2-oxopentanoate + L-glutamate. It carries out the reaction L-valine + 2-oxoglutarate = 3-methyl-2-oxobutanoate + L-glutamate. It participates in amino-acid biosynthesis; L-isoleucine biosynthesis; L-isoleucine from 2-oxobutanoate: step 4/4. The protein operates within amino-acid biosynthesis; L-leucine biosynthesis; L-leucine from 3-methyl-2-oxobutanoate: step 4/4. Its pathway is amino-acid biosynthesis; L-valine biosynthesis; L-valine from pyruvate: step 4/4. Its function is as follows. Acts on leucine, isoleucine and valine. This chain is Probable branched-chain-amino-acid aminotransferase (ilvE), found in Staphylococcus epidermidis (strain ATCC 35984 / DSM 28319 / BCRC 17069 / CCUG 31568 / BM 3577 / RP62A).